A 30-amino-acid chain; its full sequence is V-type proton ATPase catalytic subunit A isoform 1 (30 aa).

The protein belongs to the ATPase alpha/beta chains family. V-ATPase is a heteromultimeric enzyme composed of a peripheral catalytic V1 complex (main components: subunits A, B, C, D, E, and F) attached to an integral membrane V0 proton pore complex (main component: the proteolipid protein).

It carries out the reaction ATP + H2O + 4 H(+)(in) = ADP + phosphate + 5 H(+)(out). Functionally, catalytic subunit of the peripheral V1 complex of vacuolar ATPase. V-ATPase vacuolar ATPase is responsible for acidifying a variety of intracellular compartments in eukaryotic cells. This is V-type proton ATPase catalytic subunit A isoform 1 from Equisetum arvense (Field horsetail).